The chain runs to 132 residues: MKGFGSKVIRSLPNGARLICADNTGAKELEIIAVKGYKGVARRLPAGGVGSLVFVSVKKGTPEMRKQVLPAIIIRQKKEYRRPDGSRVKFEDNAAVIVTPEGSPKGSEIKGPVAKEAAERWAGVSRLAKIIH.

It belongs to the universal ribosomal protein uL14 family. As to quaternary structure, part of the 50S ribosomal subunit. Forms a cluster with proteins L3 and L24e, part of which may contact the 16S rRNA in 2 intersubunit bridges.

Its function is as follows. Binds to 23S rRNA. Forms part of two intersubunit bridges in the 70S ribosome. The protein is Large ribosomal subunit protein uL14 of Methanococcus aeolicus (strain ATCC BAA-1280 / DSM 17508 / OCM 812 / Nankai-3).